The sequence spans 167 residues: Ubiquitin-like-conjugating enzyme ATG10 (167 aa).

Cys-133 acts as the Glycyl thioester intermediate in catalysis.

The protein belongs to the ATG10 family. In terms of assembly, forms homooligomers. Interacts with ATG7 and ATG12.

Its subcellular location is the preautophagosomal structure membrane. Its function is as follows. E2-like enzyme required for the cytoplasm to vacuole transport (Cvt), autophagy and nucleophagy. Acts as an E2-like enzyme that catalyzes the conjugation of ATG12 to ATG5. ATG12 conjugation to ATG5 is required for proper localization of ATG8 to the preautophagosomal structure (PAS). Likely serves as an ATG5-recognition molecule. This Saccharomyces cerevisiae (strain ATCC 204508 / S288c) (Baker's yeast) protein is Ubiquitin-like-conjugating enzyme ATG10 (ATG10).